Consider the following 248-residue polypeptide: Clathrin light chain A (248 aa).

Residues M1–S93 are disordered. Residues A13–G25 are compositionally biased toward gly residues. Residues V100–R162 are involved in binding clathrin heavy chain. Residues S105 and S206 each carry the phosphoserine modification. K223 is subject to N6-acetyllysine. S236 bears the Phosphoserine mark. At K242 the chain carries N6-acetyllysine.

The protein belongs to the clathrin light chain family. Clathrin coats are formed from molecules containing 3 heavy chains and 3 light chains. Interacts with CALY; the interaction stimulates clathrin self-assembly and clathrin-mediated endocytosis. Interacts with CKAP5 and TACC3 forming the TACC3/ch-TOG/clathrin complex located at spindle inter-microtubules bridges; the complex implicates clathrin triskelions.

It is found in the cytoplasmic vesicle membrane. The protein resides in the membrane. Its subcellular location is the coated pit. The protein localises to the cytoplasm. It localises to the cytoskeleton. It is found in the spindle. Functionally, clathrin is the major protein of the polyhedral coat of coated pits and vesicles. Acts as a component of the TACC3/ch-TOG/clathrin complex proposed to contribute to stabilization of kinetochore fibers of the mitotic spindle by acting as inter-microtubule bridge. This chain is Clathrin light chain A (Clta), found in Rattus norvegicus (Rat).